The following is a 159-amino-acid chain: MTARGTASRFLTSVLHNGLGRYVQQLQRLSFSLSRDAPSSRGAREFVEREVTDFARRNPGVVIYVNPRPCCVPRVVAEYLNGAVREESLNCKSVEEIATLVQKLADQSGLDVIRIRKPFHTDSPSIQGQWHPFTNKPTALGGLRPREVQNPAPTQRPAQ.

A disordered region spans residues 123–159 (SPSIQGQWHPFTNKPTALGGLRPREVQNPAPTQRPAQ).

This sequence belongs to the mitochondrion-specific ribosomal protein mL43 family. Component of the mitochondrial ribosome large subunit (39S) which comprises a 16S rRNA and about 50 distinct proteins.

The protein resides in the mitochondrion. This chain is Large ribosomal subunit protein mL43 (MRPL43), found in Bos taurus (Bovine).